Reading from the N-terminus, the 348-residue chain is Protein RecA (348 aa).

Residue 66 to 73 (GPESSGKT) coordinates ATP.

It belongs to the RecA family.

Its subcellular location is the cytoplasm. Functionally, can catalyze the hydrolysis of ATP in the presence of single-stranded DNA, the ATP-dependent uptake of single-stranded DNA by duplex DNA, and the ATP-dependent hybridization of homologous single-stranded DNAs. It interacts with LexA causing its activation and leading to its autocatalytic cleavage. The protein is Protein RecA of Neisseria meningitidis serogroup B (strain ATCC BAA-335 / MC58).